A 477-amino-acid polypeptide reads, in one-letter code: C3a anaphylatoxin chemotactic receptor (477 aa).

At Met1–Asp23 the chain is on the extracellular side. An N-linked (GlcNAc...) asparagine glycan is attached at Asn9. A helical membrane pass occupies residues Ile24–Trp46. The Cytoplasmic portion of the chain corresponds to Val47–Asn57. A helical transmembrane segment spans residues Thr58–Ala80. Topologically, residues His81 to Lys96 are extracellular. An intrachain disulfide couples Cys95 to Cys172. A helical transmembrane segment spans residues Leu97–Leu118. The Cytoplasmic segment spans residues Asp119–Ala139. Residues Phe140–Tyr160 form a helical membrane-spanning segment. At Arg161–Arg333 the chain is on the extracellular side. The N-linked (GlcNAc...) asparagine glycan is linked to Asn168. Sulfotyrosine occurs at positions 174 and 184. N-linked (GlcNAc...) asparagine glycosylation is found at Asn197 and Asn201. Tyr312 is modified (sulfotyrosine). The helical transmembrane segment at Leu334–Val353 threads the bilayer. Topologically, residues Phe354–Arg370 are cytoplasmic. The helical transmembrane segment at Val371 to Leu393 threads the bilayer. Topologically, residues Leu394–Asp410 are extracellular. A helical membrane pass occupies residues His411–Leu431. At Gly432–Val477 the chain is on the cytoplasmic side. Ser452 bears the Phosphoserine mark. A Phosphothreonine modification is found at Thr456.

This sequence belongs to the G-protein coupled receptor 1 family. In terms of assembly, interacts with VGF-derived peptide TLQP-21. As to expression, detected in varying levels in all tissues examined except the spleen. Especially abundant in heart and lung.

It localises to the cell membrane. Functionally, receptor for the chemotactic and inflammatory peptide anaphylatoxin C3a. This receptor stimulates chemotaxis, granule enzyme release and superoxide anion production. In Mus musculus (Mouse), this protein is C3a anaphylatoxin chemotactic receptor (C3ar1).